The following is a 471-amino-acid chain: UDP-N-acetylmuramate--L-alanine ligase (471 aa).

Residue 125 to 131 coordinates ATP; the sequence is GTHGKTT.

Belongs to the MurCDEF family.

The protein resides in the cytoplasm. It catalyses the reaction UDP-N-acetyl-alpha-D-muramate + L-alanine + ATP = UDP-N-acetyl-alpha-D-muramoyl-L-alanine + ADP + phosphate + H(+). The protein operates within cell wall biogenesis; peptidoglycan biosynthesis. In terms of biological role, cell wall formation. This is UDP-N-acetylmuramate--L-alanine ligase from Kineococcus radiotolerans (strain ATCC BAA-149 / DSM 14245 / SRS30216).